A 430-amino-acid polypeptide reads, in one-letter code: tRNA(Ile)-lysidine synthase (430 aa).

Residue 27-32 (SGGSDS) participates in ATP binding.

The protein belongs to the tRNA(Ile)-lysidine synthase family.

Its subcellular location is the cytoplasm. It catalyses the reaction cytidine(34) in tRNA(Ile2) + L-lysine + ATP = lysidine(34) in tRNA(Ile2) + AMP + diphosphate + H(+). Its function is as follows. Ligates lysine onto the cytidine present at position 34 of the AUA codon-specific tRNA(Ile) that contains the anticodon CAU, in an ATP-dependent manner. Cytidine is converted to lysidine, thus changing the amino acid specificity of the tRNA from methionine to isoleucine. This is tRNA(Ile)-lysidine synthase from Rickettsia prowazekii (strain Madrid E).